We begin with the raw amino-acid sequence, 42 residues long: Envelope protein P10 (42 aa).

Residues 20 to 40 (TTAAKIAVVYALVGLVGGLLL) form a helical membrane-spanning segment.

Its subcellular location is the virion membrane. Functionally, involved in cell lysis. The sequence is that of Envelope protein P10 (P10) from Pseudomonas savastanoi pv. phaseolicola (Pseudomonas syringae pv. phaseolicola).